Reading from the N-terminus, the 200-residue chain is Transcription elongation factor A protein-like 3 (200 aa).

A compositionally biased stretch (basic and acidic residues) spans 1 to 19 (MEEVRGENEGKLEKEGKPE). Residues 1–200 (MEEVRGENEG…QRGLHDIPYL (200 aa)) form a disordered region. Residues 20-34 (DEVEPEDEEKSDEDE) show a composition bias toward acidic residues. Serine 30 bears the Phosphoserine mark. Composition is skewed to basic and acidic residues over residues 47–85 (GKPE…KPDS), 94–106 (RAAE…DYVP), and 114–153 (DRGT…EELR).

It belongs to the TFS-II family. TFA subfamily.

Its subcellular location is the nucleus. May be involved in transcriptional regulation. In Mus musculus (Mouse), this protein is Transcription elongation factor A protein-like 3 (Tceal3).